Consider the following 460-residue polypeptide: V-type ATP synthase beta chain (460 aa).

Belongs to the ATPase alpha/beta chains family.

In terms of biological role, produces ATP from ADP in the presence of a proton gradient across the membrane. The V-type beta chain is a regulatory subunit. The polypeptide is V-type ATP synthase beta chain (Thermotoga neapolitana (strain ATCC 49049 / DSM 4359 / NBRC 107923 / NS-E)).